A 391-amino-acid polypeptide reads, in one-letter code: Chorismate synthase (391 aa).

Arginine 48 is a binding site for NADP(+). Residues 126-128 (RAS), glycine 286, 301-305 (KPTSS), and arginine 328 each bind FMN.

It belongs to the chorismate synthase family. Requires FMNH2 as cofactor.

It carries out the reaction 5-O-(1-carboxyvinyl)-3-phosphoshikimate = chorismate + phosphate. It functions in the pathway metabolic intermediate biosynthesis; chorismate biosynthesis; chorismate from D-erythrose 4-phosphate and phosphoenolpyruvate: step 7/7. In terms of biological role, catalyzes the anti-1,4-elimination of the C-3 phosphate and the C-6 proR hydrogen from 5-enolpyruvylshikimate-3-phosphate (EPSP) to yield chorismate, which is the branch point compound that serves as the starting substrate for the three terminal pathways of aromatic amino acid biosynthesis. This reaction introduces a second double bond into the aromatic ring system. This Saccharolobus islandicus (strain L.S.2.15 / Lassen #1) (Sulfolobus islandicus) protein is Chorismate synthase.